Here is a 239-residue protein sequence, read N- to C-terminus: MQRPSGRAPEQLRDVTITRQFTRHAEGSVLVCFGDTKVICTASVEAGVPRFLKGQGQGWITAEYGMLPRSTGSRMGREAARGKQGGRTVEIQRLIGRSLRAAVDLTALGEHSIVIDCDVIQADGGTRTASITGALVALVDAIRYLQREKMITTDPLVHMVAAVSVGIYEGVPVLDLDYPEDSNAETDMNMVMTEEGGLIEIQGTAEKKPFTDEQFAGMFSLAKKGVAELVALQKAALAQ.

Phosphate-binding positions include Arg87 and 125-127; that span reads GTR.

This sequence belongs to the RNase PH family. As to quaternary structure, homohexameric ring arranged as a trimer of dimers.

It catalyses the reaction tRNA(n+1) + phosphate = tRNA(n) + a ribonucleoside 5'-diphosphate. Phosphorolytic 3'-5' exoribonuclease that plays an important role in tRNA 3'-end maturation. Removes nucleotide residues following the 3'-CCA terminus of tRNAs; can also add nucleotides to the ends of RNA molecules by using nucleoside diphosphates as substrates, but this may not be physiologically important. Probably plays a role in initiation of 16S rRNA degradation (leading to ribosome degradation) during starvation. In Saccharophagus degradans (strain 2-40 / ATCC 43961 / DSM 17024), this protein is Ribonuclease PH.